The following is a 67-amino-acid chain: MGSFSLTHWIIVLIIVVLIFGTKKLRNVGKDLGGAVHDFKQGLNEGTDGKEAQKDDVIEHKKDEDKA.

A helical membrane pass occupies residues 1–21 (MGSFSLTHWIIVLIIVVLIFG). Positions 43-67 (LNEGTDGKEAQKDDVIEHKKDEDKA) are disordered. Over residues 47 to 67 (TDGKEAQKDDVIEHKKDEDKA) the composition is skewed to basic and acidic residues.

It belongs to the TatA/E family. The Tat system comprises two distinct complexes: a TatABC complex, containing multiple copies of TatA, TatB and TatC subunits, and a separate TatA complex, containing only TatA subunits. Substrates initially bind to the TatABC complex, which probably triggers association of the separate TatA complex to form the active translocon.

The protein resides in the cell inner membrane. In terms of biological role, part of the twin-arginine translocation (Tat) system that transports large folded proteins containing a characteristic twin-arginine motif in their signal peptide across membranes. TatA could form the protein-conducting channel of the Tat system. The polypeptide is Sec-independent protein translocase protein TatA (Neisseria gonorrhoeae (strain ATCC 700825 / FA 1090)).